Consider the following 217-residue polypeptide: ATP-binding protein BexA (217 aa).

An ABC transporter domain is found at 2-217 (IRVNNVCKKY…AYQYYNETQK (216 aa)). 38–45 (GRNGAGKS) is a binding site for ATP.

The protein belongs to the ABC transporter superfamily.

The protein localises to the cell inner membrane. In terms of biological role, putative ATP-binding protein, and an energy-coupling component of capsule polysaccharide export apparatus. The polypeptide is ATP-binding protein BexA (bexA) (Haemophilus influenzae).